The sequence spans 158 residues: NADH-quinone oxidoreductase subunit B (158 aa).

[4Fe-4S] cluster is bound by residues Cys37, Cys38, Cys102, and Cys132.

This sequence belongs to the complex I 20 kDa subunit family. NDH-1 is composed of 14 different subunits. Subunits NuoB, C, D, E, F, and G constitute the peripheral sector of the complex. Requires [4Fe-4S] cluster as cofactor.

The protein resides in the cell inner membrane. The enzyme catalyses a quinone + NADH + 5 H(+)(in) = a quinol + NAD(+) + 4 H(+)(out). Its function is as follows. NDH-1 shuttles electrons from NADH, via FMN and iron-sulfur (Fe-S) centers, to quinones in the respiratory chain. Couples the redox reaction to proton translocation (for every two electrons transferred, four hydrogen ions are translocated across the cytoplasmic membrane), and thus conserves the redox energy in a proton gradient. This chain is NADH-quinone oxidoreductase subunit B, found in Nitrosomonas europaea (strain ATCC 19718 / CIP 103999 / KCTC 2705 / NBRC 14298).